A 240-amino-acid polypeptide reads, in one-letter code: Ribonuclease PH (240 aa).

Phosphate contacts are provided by residues R86 and 124–126 (GTR).

It belongs to the RNase PH family. In terms of assembly, homohexameric ring arranged as a trimer of dimers.

The catalysed reaction is tRNA(n+1) + phosphate = tRNA(n) + a ribonucleoside 5'-diphosphate. Phosphorolytic 3'-5' exoribonuclease that plays an important role in tRNA 3'-end maturation. Removes nucleotide residues following the 3'-CCA terminus of tRNAs; can also add nucleotides to the ends of RNA molecules by using nucleoside diphosphates as substrates, but this may not be physiologically important. Probably plays a role in initiation of 16S rRNA degradation (leading to ribosome degradation) during starvation. The chain is Ribonuclease PH from Rickettsia prowazekii (strain Madrid E).